The following is a 578-amino-acid chain: Sulfite reductase [NADPH] hemoprotein beta-component (578 aa).

4 residues coordinate [4Fe-4S] cluster: C441, C447, C487, and C491. C491 provides a ligand contact to siroheme.

Belongs to the nitrite and sulfite reductase 4Fe-4S domain family. In terms of assembly, alpha(8)-beta(8). The alpha component is a flavoprotein, the beta component is a hemoprotein. It depends on siroheme as a cofactor. The cofactor is [4Fe-4S] cluster.

The enzyme catalyses hydrogen sulfide + 3 NADP(+) + 3 H2O = sulfite + 3 NADPH + 4 H(+). It functions in the pathway sulfur metabolism; hydrogen sulfide biosynthesis; hydrogen sulfide from sulfite (NADPH route): step 1/1. In terms of biological role, component of the sulfite reductase complex that catalyzes the 6-electron reduction of sulfite to sulfide. This is one of several activities required for the biosynthesis of L-cysteine from sulfate. The protein is Sulfite reductase [NADPH] hemoprotein beta-component of Vibrio vulnificus (strain CMCP6).